The following is a 453-amino-acid chain: uncharacterized protein (453 aa).

This sequence to B.subtilis YcdB.

This is an uncharacterized protein from Bacillus subtilis (strain 168).